Consider the following 182-residue polypeptide: Keratin, type II cytoskeletal 68 kDa, component IA (182 aa).

Residues 1-66 (DAEQHGEVAL…TLLEGEECRM (66 aa)) enclose the IF rod domain. Residues 1 to 66 (DAEQHGEVAL…TLLEGEECRM (66 aa)) form a coil 2B region. The segment at 67–86 (SGECQSSVSIEMVHNTTSSS) is H2 subdomain. The segment at 67 to 182 (SGECQSSVSI…SQSQRSHHKL (116 aa)) is tail. The interval 87–162 (SGGSGALGGG…GSCAVSGVGG (76 aa)) is V2 subdomain. Residues 104–124 (GSGGLGSGSLGSGRLGSGGRG) are compositionally biased toward gly residues. The disordered stretch occupies residues 104-182 (GSGGLGSGSL…SQSQRSHHKL (79 aa)). 2 stretches are compositionally biased toward low complexity: residues 144–158 (VRGSVSNSGGSCAVS) and 165–176 (SVRVTQSSSQSQ). The segment at 163–182 (RGSVRVTQSSSQSQRSHHKL) is E2 subdomain.

Belongs to the intermediate filament family. Heterotetramer of two type I and two type II keratins.

The protein is Keratin, type II cytoskeletal 68 kDa, component IA of Bos taurus (Bovine).